The following is a 207-amino-acid chain: Dephospho-CoA kinase (207 aa).

Positions 10–207 (ILGLTGGIGS…FYLTLKGGQP (198 aa)) constitute a DPCK domain. 18 to 23 (GSGKSA) lines the ATP pocket.

This sequence belongs to the CoaE family.

Its subcellular location is the cytoplasm. It catalyses the reaction 3'-dephospho-CoA + ATP = ADP + CoA + H(+). The protein operates within cofactor biosynthesis; coenzyme A biosynthesis; CoA from (R)-pantothenate: step 5/5. Functionally, catalyzes the phosphorylation of the 3'-hydroxyl group of dephosphocoenzyme A to form coenzyme A. This is Dephospho-CoA kinase from Pseudomonas putida (strain ATCC 47054 / DSM 6125 / CFBP 8728 / NCIMB 11950 / KT2440).